The following is a 229-amino-acid chain: 7-cyano-7-deazaguanine synthase (229 aa).

An ATP-binding site is contributed by 9–19; sequence YSGGLDSTTCM. Positions 189, 199, 202, and 205 each coordinate Zn(2+).

This sequence belongs to the QueC family. It depends on Zn(2+) as a cofactor.

The catalysed reaction is 7-carboxy-7-deazaguanine + NH4(+) + ATP = 7-cyano-7-deazaguanine + ADP + phosphate + H2O + H(+). It participates in purine metabolism; 7-cyano-7-deazaguanine biosynthesis. Functionally, catalyzes the ATP-dependent conversion of 7-carboxy-7-deazaguanine (CDG) to 7-cyano-7-deazaguanine (preQ(0)). The sequence is that of 7-cyano-7-deazaguanine synthase from Geotalea daltonii (strain DSM 22248 / JCM 15807 / FRC-32) (Geobacter daltonii).